The sequence spans 427 residues: ATP-sensitive inward rectifier potassium channel 12 (427 aa).

Topologically, residues 1–77 are cytoplasmic; sequence MTAASRANPY…LADMFTTCVD (77 aa). Residue cysteine 75 is modified to S-nitrosocysteine. The chain crosses the membrane as a helical span at residues 78 to 104; sequence IRWRYMLLIFSLAFLASWLLFGIIFWV. Positions 79 and 81 each coordinate a 1,2-diacyl-sn-glycero-3-phospho-(1D-myo-inositol-4,5-bisphosphate). Over 105–129 the chain is Extracellular; sequence IAVAHGDLEPAEGRGRTPCVLQVHG. A disulfide bond links cysteine 123 and cysteine 155. Positions 130 to 146 form an intramembrane region, helical; Pore-forming; the sequence is FMAAFLFSIETQTTIGY. Residues threonine 143, isoleucine 144, glycine 145, and tyrosine 146 each contribute to the K(+) site. The Selectivity filter signature appears at 143–148; sequence TIGYGL. The Extracellular segment spans residues 147 to 155; it reads GLRCVTEEC. The helical transmembrane segment at 156–183 threads the bilayer; the sequence is PVAVFMVVAQSIVGCIIDSFMIGAIMAK. Residues lysine 183 and lysine 188 each contribute to the a 1,2-diacyl-sn-glycero-3-phospho-(1D-myo-inositol-4,5-bisphosphate) site. At 184–427 the chain is on the cytoplasmic side; that stretch reads MARPKKRAQT…ERPYRRESEI (244 aa). Residues 387–427 are disordered; sequence DEEDEVATDRDGRSPQPEHDFDRLQASSAALERPYRRESEI. Basic and acidic residues predominate over residues 393 to 409; it reads ATDRDGRSPQPEHDFDR. Positions 425 to 427 match the PDZ-binding motif; the sequence is SEI.

It belongs to the inward rectifier-type potassium channel (TC 1.A.2.1) family. KCNJ12 subfamily. Homotetramer. Forms heteromer with KCNJ4. Can form heteromeric channels with Kir2.6/KCNJ18. Association, via its PDZ-recognition domain, with LIN7A, LIN7B, LIN7C, DLG1, CASK and APBA1 plays a key role in its localization and trafficking. In terms of tissue distribution, highest level in cerebellum.

It localises to the membrane. It is found in the cell membrane. The protein localises to the sarcolemma. The protein resides in the T-tubule. It catalyses the reaction K(+)(in) = K(+)(out). Activated by phosphatidylinositol 4,5-biphosphate (PtdIns(4,5)P2). PtdIns(4,5)P2 binding to the cytoplasmic side of the channel triggers a conformation change leading to channel opening. Inhibited by Ba(2+). Inward rectifying potassium channel that probably participates in controlling the resting membrane potential in electrically excitable cells. It probably participates in establishing action potential waveform and excitability of neuronal and muscle tissues. Inward rectifier potassium channels are characterized by a greater tendency to allow potassium to flow into the cell rather than out of it. Their voltage dependence is regulated by the concentration of extracellular potassium; as external potassium is raised, the voltage range of the channel opening shifts to more positive voltages. The inward rectification is mainly due to the blockage of outward current by internal magnesium. This Mus musculus (Mouse) protein is ATP-sensitive inward rectifier potassium channel 12 (Kcnj12).